Here is a 108-residue protein sequence, read N- to C-terminus: Hydrogenase expression/formation protein HupN (108 aa).

The tract at residues 88-108 (REPQLPPHLQAQLPPKEPNSP) is disordered.

The protein belongs to the HupF/HypC family.

This chain is Hydrogenase expression/formation protein HupN (hupN), found in Azotobacter chroococcum mcd 1.